A 366-amino-acid chain; its full sequence is 1-aminocyclopropane-1-carboxylate oxidase homolog 12 (366 aa).

Residues 215-314 (KTLLMICHYY…RISVASFFSS (100 aa)) enclose the Fe2OG dioxygenase domain. Residues His239, Asp241, and His295 each coordinate Fe cation. Arg305 lines the 2-oxoglutarate pocket.

This sequence belongs to the iron/ascorbate-dependent oxidoreductase family. The cofactor is Fe(2+).

The sequence is that of 1-aminocyclopropane-1-carboxylate oxidase homolog 12 from Arabidopsis thaliana (Mouse-ear cress).